We begin with the raw amino-acid sequence, 236 residues long: Transcriptional regulatory protein RprY (236 aa).

A Response regulatory domain is found at 9 to 123; it reads RILLCEDDEN…ELTFRIEAIL (115 aa). 4-aspartylphosphate is present on aspartate 58. The segment at residues 134–231 is a DNA-binding region (ompR/PhoB-type); it reads SNVYKIGKFT…IHGKGYKLIT (98 aa).

Post-translationally, phosphorylated by RprX.

The protein resides in the cytoplasm. Member of the two-component regulatory system RprX/RprY. In Bacteroides fragilis (strain YCH46), this protein is Transcriptional regulatory protein RprY (rprY).